The primary structure comprises 533 residues: (E)-beta-farnesene synthase (533 aa).

D286, D290, N430, S434, and E438 together coordinate Mg(2+). Residues 286-290 (DDMMD) carry the DDXXD motif motif.

Belongs to the terpene synthase family. The cofactor is Mg(2+). Requires Co(2+) as cofactor. It depends on Mn(2+) as a cofactor.

It localises to the cytoplasm. The catalysed reaction is (2E,6E)-farnesyl diphosphate = (E)-beta-farnesene + diphosphate. It participates in secondary metabolite biosynthesis; terpenoid biosynthesis. Its function is as follows. Sesquiterpene cyclase catalyzing the production of sixfold more beta-farnesene than alpha-bergamotene from farnesyl diphosphate. Involved in indirect defense by producing volatile signals attracting natural enemies of herbivores. The protein is (E)-beta-farnesene synthase of Zea perennis (Perennial teosinte).